Consider the following 116-residue polypeptide: Ribosome-binding factor A (116 aa).

Belongs to the RbfA family. As to quaternary structure, monomer. Binds 30S ribosomal subunits, but not 50S ribosomal subunits or 70S ribosomes.

Its subcellular location is the cytoplasm. Its function is as follows. One of several proteins that assist in the late maturation steps of the functional core of the 30S ribosomal subunit. Associates with free 30S ribosomal subunits (but not with 30S subunits that are part of 70S ribosomes or polysomes). Required for efficient processing of 16S rRNA. May interact with the 5'-terminal helix region of 16S rRNA. The sequence is that of Ribosome-binding factor A from Clostridium botulinum (strain Eklund 17B / Type B).